A 125-amino-acid chain; its full sequence is Small ribosomal subunit protein uS12 (125 aa).

Residue Asp89 is modified to 3-methylthioaspartic acid.

It belongs to the universal ribosomal protein uS12 family. As to quaternary structure, part of the 30S ribosomal subunit. Contacts proteins S8 and S17. May interact with IF1 in the 30S initiation complex.

Functionally, with S4 and S5 plays an important role in translational accuracy. In terms of biological role, interacts with and stabilizes bases of the 16S rRNA that are involved in tRNA selection in the A site and with the mRNA backbone. Located at the interface of the 30S and 50S subunits, it traverses the body of the 30S subunit contacting proteins on the other side and probably holding the rRNA structure together. The combined cluster of proteins S8, S12 and S17 appears to hold together the shoulder and platform of the 30S subunit. This Acidovorax sp. (strain JS42) protein is Small ribosomal subunit protein uS12.